A 184-amino-acid polypeptide reads, in one-letter code: Rubrerythrin-2 (184 aa).

The 145-residue stretch at 2-146 folds into the Ferritin-like diiron domain; the sequence is SVKNAMTADF…DAQDSAKENK (145 aa). 10 residues coordinate Fe(3+): E19, E52, E94, E97, E128, H131, C156, C159, C171, and C174. Residues 151–184 enclose the Rubredoxin-like domain; sequence GKVYICPVCGFTTLDENIEQCPICGVKKDKFQAF.

The cofactor is Fe(3+).

The catalysed reaction is H2O2 + NADH + H(+) = NAD(+) + 2 H2O. Its activity is regulated as follows. Rubredoxin (Rd) increases the NADH consumption rate by serving as an intermediary electron-transfer shuttle between NROR and Rbr2. Its function is as follows. Functions as the terminal component of an NADH peroxidase (NADH:H(2)O(2) oxidoreductase) when using NADH:rubredoxin oxidoreductase (NROR) as the electron transport intermediary from NADH to Rbr2. The polypeptide is Rubrerythrin-2 (rbr2) (Clostridium acetobutylicum (strain ATCC 824 / DSM 792 / JCM 1419 / IAM 19013 / LMG 5710 / NBRC 13948 / NRRL B-527 / VKM B-1787 / 2291 / W)).